The sequence spans 415 residues: Gamma-glutamyl phosphate reductase (415 aa).

The protein belongs to the gamma-glutamyl phosphate reductase family.

It is found in the cytoplasm. The enzyme catalyses L-glutamate 5-semialdehyde + phosphate + NADP(+) = L-glutamyl 5-phosphate + NADPH + H(+). The protein operates within amino-acid biosynthesis; L-proline biosynthesis; L-glutamate 5-semialdehyde from L-glutamate: step 2/2. In terms of biological role, catalyzes the NADPH-dependent reduction of L-glutamate 5-phosphate into L-glutamate 5-semialdehyde and phosphate. The product spontaneously undergoes cyclization to form 1-pyrroline-5-carboxylate. The chain is Gamma-glutamyl phosphate reductase from Bacillus velezensis (strain DSM 23117 / BGSC 10A6 / LMG 26770 / FZB42) (Bacillus amyloliquefaciens subsp. plantarum).